Reading from the N-terminus, the 388-residue chain is Succinate--CoA ligase [ADP-forming] subunit beta (388 aa).

An ATP-grasp domain is found at 9–244 (KQLFAEYGLP…PSQEDEREAH (236 aa)). Residues K46, 53-55 (GRG), E99, T102, and E107 each bind ATP. 2 residues coordinate Mg(2+): N199 and D213. Substrate-binding positions include N264 and 321 to 323 (GIV).

It belongs to the succinate/malate CoA ligase beta subunit family. As to quaternary structure, heterotetramer of two alpha and two beta subunits. Mg(2+) serves as cofactor.

It carries out the reaction succinate + ATP + CoA = succinyl-CoA + ADP + phosphate. The catalysed reaction is GTP + succinate + CoA = succinyl-CoA + GDP + phosphate. It functions in the pathway carbohydrate metabolism; tricarboxylic acid cycle; succinate from succinyl-CoA (ligase route): step 1/1. Its function is as follows. Succinyl-CoA synthetase functions in the citric acid cycle (TCA), coupling the hydrolysis of succinyl-CoA to the synthesis of either ATP or GTP and thus represents the only step of substrate-level phosphorylation in the TCA. The beta subunit provides nucleotide specificity of the enzyme and binds the substrate succinate, while the binding sites for coenzyme A and phosphate are found in the alpha subunit. The polypeptide is Succinate--CoA ligase [ADP-forming] subunit beta (Saccharophagus degradans (strain 2-40 / ATCC 43961 / DSM 17024)).